A 373-amino-acid polypeptide reads, in one-letter code: Putative zinc finger protein 012R (373 aa).

The C2H2-type zinc-finger motif lies at 2-29 (FECTHCDLHFESKSKLATHQKTKKCTAH).

It belongs to the IIV-6 302L family.

The polypeptide is Putative zinc finger protein 012R (Invertebrate iridescent virus 3 (IIV-3)).